The primary structure comprises 112 residues: Abdominal ganglion neuropeptides L5-67 (112 aa).

The first 23 residues, 1 to 23 (MKTAVLLVCLAYVMAAILSLCAS), serve as a signal peptide directing secretion. Phe33 is subject to Phenylalanine amide.

In terms of processing, the prohormone is proteolytically cleaved in 2 steps, yielding first 2 products: luqin and PRMP. In the second step, PRMP is cleaved to yield luqin-B and luqin-C. In terms of tissue distribution, neurons L2-4 and L6, also called giant dorsal LUQ (Left Upper Quadrant) neurons of the abdominal ganglion. Also expressed in smaller neurons in the CNS and in peripheral organs such as the kidney.

Its subcellular location is the secreted. The protein is Abdominal ganglion neuropeptides L5-67 of Aplysia californica (California sea hare).